We begin with the raw amino-acid sequence, 165 residues long: AP-3 complex subunit sigma (165 aa).

Belongs to the adaptor complexes small subunit family. In terms of assembly, adaptor protein complex 3 (AP-3) is a heterotetramer composed of 2 large adaptins (apl5 and apl6), a medium adaptin (apm3) and a small adaptin (aps3).

The protein localises to the golgi apparatus. It localises to the cytoplasmic vesicle membrane. Its function is as follows. Part of the AP-3 complex, an adaptor-related complex which is not clathrin-associated. The complex is associated with the Golgi region as well as more peripheral structures. It facilitates the budding of vesicles from the Golgi membrane and may be directly involved in trafficking to the vacuole. The sequence is that of AP-3 complex subunit sigma (aps3) from Schizosaccharomyces pombe (strain 972 / ATCC 24843) (Fission yeast).